Reading from the N-terminus, the 156-residue chain is ATP synthase subunit b (156 aa).

A helical membrane pass occupies residues 7–27 (LIGQAIWFALFVFFCMKFVWP).

This sequence belongs to the ATPase B chain family. As to quaternary structure, F-type ATPases have 2 components, F(1) - the catalytic core - and F(0) - the membrane proton channel. F(1) has five subunits: alpha(3), beta(3), gamma(1), delta(1), epsilon(1). F(0) has three main subunits: a(1), b(2) and c(10-14). The alpha and beta chains form an alternating ring which encloses part of the gamma chain. F(1) is attached to F(0) by a central stalk formed by the gamma and epsilon chains, while a peripheral stalk is formed by the delta and b chains.

Its subcellular location is the cell inner membrane. Functionally, f(1)F(0) ATP synthase produces ATP from ADP in the presence of a proton or sodium gradient. F-type ATPases consist of two structural domains, F(1) containing the extramembraneous catalytic core and F(0) containing the membrane proton channel, linked together by a central stalk and a peripheral stalk. During catalysis, ATP synthesis in the catalytic domain of F(1) is coupled via a rotary mechanism of the central stalk subunits to proton translocation. In terms of biological role, component of the F(0) channel, it forms part of the peripheral stalk, linking F(1) to F(0). The chain is ATP synthase subunit b from Alcanivorax borkumensis (strain ATCC 700651 / DSM 11573 / NCIMB 13689 / SK2).